A 3589-amino-acid polypeptide reads, in one-letter code: D-lysergyl-peptide-synthetase subunit 1 (3589 aa).

Positions 344 to 742 are adenylation (A) domain 1; sequence NCHSRPDSLA…IGRKDLQVKV (399 aa). Positions 883 to 952 constitute a Carrier 1 domain; it reads VERRLQLLFA…KLRDLAAASS (70 aa). At serine 915 the chain carries O-(pantetheine 4'-phosphoryl)serine. Positions 995 to 1380 are condensation (C) domain 1; that stretch reads EDIYPCTSLQ…SQFQHILTQI (386 aa). Positions 1424–1826 are adenylation (A) domain 2; it reads QAKAQMQPEA…RRKDSQVKLR (403 aa). Positions 1974-2042 constitute a Carrier 2 domain; that stretch reads LERELQKIWA…TIEKLAAAAV (69 aa). At serine 2006 the chain carries O-(pantetheine 4'-phosphoryl)serine. Positions 2087–2509 are condensation (C) domain 2; sequence VEDIYPCSPI…IEMLDEEHRS (423 aa). The tract at residues 2534–2929 is adenylation (A) domain 3; the sequence is CLESPESPAI…GRKDDQVKIR (396 aa). A Carrier 3 domain is found at 3064–3132; sequence LETRLQELVG…RLSELAVVLN (69 aa). Serine 3096 carries the post-translational modification O-(pantetheine 4'-phosphoryl)serine. The interval 3187 to 3585 is cyclization (Cyc) domain; the sequence is TNFIALHFSQ…TYPESLVSEL (399 aa).

It belongs to the NRP synthetase family.

It participates in alkaloid biosynthesis; ergot alkaloid biosynthesis. In terms of biological role, D-lysergyl-peptide-synthetase subunit 1; part of the gene cluster that mediates the biosynthesis of fungal ergot alkaloid ergovaline, the predominant ergopeptine product in E.festucae var. lolii. DmaW catalyzes the first step of ergot alkaloid biosynthesis by condensing dimethylallyl diphosphate (DMAP) and tryptophan to form 4-dimethylallyl-L-tryptophan. The second step is catalyzed by the methyltransferase easF that methylates 4-dimethylallyl-L-tryptophan in the presence of S-adenosyl-L-methionine, resulting in the formation of 4-dimethylallyl-L-abrine. The catalase easC and the FAD-dependent oxidoreductase easE then transform 4-dimethylallyl-L-abrine to chanoclavine-I which is further oxidized by easD in the presence of NAD(+), resulting in the formation of chanoclavine-I aldehyde. Agroclavine dehydrogenase easG then mediates the conversion of chanoclavine-I aldehyde to agroclavine via a non-enzymatic adduct reaction: the substrate is an iminium intermediate that is formed spontaneously from chanoclavine-I aldehyde in the presence of glutathione. The presence of easA is not required to complete this reaction. Further conversion of agroclavine to paspalic acid is a two-step process involving oxidation of agroclavine to elymoclavine and of elymoclavine to paspalic acid, the second step being performed by the elymoclavine oxidase cloA. Paspalic acid is then further converted to D-lysergic acid. Ergovaline is assembled from D-lysergic acid and three different amino acids by the D-lysergyl-peptide-synthetase composed of a monomudular (lpsB) and a trimodular (lpsA) nonribosomal peptide synthetase subunit. In Epichloe festucae var. lolii (Neotyphodium lolii), this protein is D-lysergyl-peptide-synthetase subunit 1.